A 379-amino-acid polypeptide reads, in one-letter code: Chaperone protein DnaJ (379 aa).

Positions Asp4 to Gly69 constitute a J domain. A CR-type zinc finger spans residues Gly137 to Glu215. 8 residues coordinate Zn(2+): Cys150, Cys153, Cys167, Cys170, Cys189, Cys192, Cys203, and Cys206. CXXCXGXG motif repeat units follow at residues Cys150–Gly157, Cys167–Gly174, Cys189–Gly196, and Cys203–Gly210.

Belongs to the DnaJ family. Homodimer. Requires Zn(2+) as cofactor.

The protein resides in the cytoplasm. Functionally, participates actively in the response to hyperosmotic and heat shock by preventing the aggregation of stress-denatured proteins and by disaggregating proteins, also in an autonomous, DnaK-independent fashion. Unfolded proteins bind initially to DnaJ; upon interaction with the DnaJ-bound protein, DnaK hydrolyzes its bound ATP, resulting in the formation of a stable complex. GrpE releases ADP from DnaK; ATP binding to DnaK triggers the release of the substrate protein, thus completing the reaction cycle. Several rounds of ATP-dependent interactions between DnaJ, DnaK and GrpE are required for fully efficient folding. Also involved, together with DnaK and GrpE, in the DNA replication of plasmids through activation of initiation proteins. The polypeptide is Chaperone protein DnaJ (Sinorhizobium fredii (strain NBRC 101917 / NGR234)).